A 425-amino-acid polypeptide reads, in one-letter code: Probable proline--tRNA ligase, mitochondrial (425 aa).

It belongs to the class-II aminoacyl-tRNA synthetase family.

It localises to the mitochondrion. The enzyme catalyses tRNA(Pro) + L-proline + ATP = L-prolyl-tRNA(Pro) + AMP + diphosphate. The polypeptide is Probable proline--tRNA ligase, mitochondrial (Schizosaccharomyces pombe (strain 972 / ATCC 24843) (Fission yeast)).